A 210-amino-acid polypeptide reads, in one-letter code: Imidazole glycerol phosphate synthase subunit HisH 1 (210 aa).

The 208-residue stretch at 3-210 folds into the Glutamine amidotransferase type-1 domain; it reads KIAIVDYGMC…LDNFLSFSNV (208 aa). Residue cysteine 82 is the Nucleophile of the active site. Residues histidine 189 and glutamate 191 contribute to the active site.

Heterodimer of HisH and HisF.

Its subcellular location is the cytoplasm. It catalyses the reaction 5-[(5-phospho-1-deoxy-D-ribulos-1-ylimino)methylamino]-1-(5-phospho-beta-D-ribosyl)imidazole-4-carboxamide + L-glutamine = D-erythro-1-(imidazol-4-yl)glycerol 3-phosphate + 5-amino-1-(5-phospho-beta-D-ribosyl)imidazole-4-carboxamide + L-glutamate + H(+). The catalysed reaction is L-glutamine + H2O = L-glutamate + NH4(+). It participates in amino-acid biosynthesis; L-histidine biosynthesis; L-histidine from 5-phospho-alpha-D-ribose 1-diphosphate: step 5/9. Functionally, IGPS catalyzes the conversion of PRFAR and glutamine to IGP, AICAR and glutamate. The HisH subunit provides the glutamine amidotransferase activity that produces the ammonia necessary to HisF for the synthesis of IGP and AICAR. The polypeptide is Imidazole glycerol phosphate synthase subunit HisH 1 (hisH1) (Parasynechococcus marenigrum (strain WH8102)).